Reading from the N-terminus, the 255-residue chain is Epoxyqueuosine reductase QueH (255 aa).

4 residues coordinate [4Fe-4S] cluster: cysteine 44, cysteine 45, cysteine 128, and cysteine 131. The cysteines at positions 210 and 212 are disulfide-linked.

The protein belongs to the QueH family.

It catalyses the reaction epoxyqueuosine(34) in tRNA + AH2 = queuosine(34) in tRNA + A + H2O. It functions in the pathway tRNA modification; tRNA-queuosine biosynthesis. Catalyzes the conversion of epoxyqueuosine (oQ) to queuosine (Q), which is a hypermodified base found in the wobble positions of tRNA(Asp), tRNA(Asn), tRNA(His) and tRNA(Tyr). The polypeptide is Epoxyqueuosine reductase QueH (Streptococcus pyogenes serotype M1).